A 342-amino-acid polypeptide reads, in one-letter code: UDP-N-acetylglucosamine--N-acetylmuramyl-(pentapeptide) pyrophosphoryl-undecaprenol N-acetylglucosamine transferase (342 aa).

UDP-N-acetyl-alpha-D-glucosamine is bound by residues 10–12, Asn124, Ser177, and Gln275; that span reads TGG.

The protein belongs to the glycosyltransferase 28 family. MurG subfamily.

It localises to the cell inner membrane. It carries out the reaction di-trans,octa-cis-undecaprenyl diphospho-N-acetyl-alpha-D-muramoyl-L-alanyl-D-glutamyl-meso-2,6-diaminopimeloyl-D-alanyl-D-alanine + UDP-N-acetyl-alpha-D-glucosamine = di-trans,octa-cis-undecaprenyl diphospho-[N-acetyl-alpha-D-glucosaminyl-(1-&gt;4)]-N-acetyl-alpha-D-muramoyl-L-alanyl-D-glutamyl-meso-2,6-diaminopimeloyl-D-alanyl-D-alanine + UDP + H(+). It participates in cell wall biogenesis; peptidoglycan biosynthesis. Functionally, cell wall formation. Catalyzes the transfer of a GlcNAc subunit on undecaprenyl-pyrophosphoryl-MurNAc-pentapeptide (lipid intermediate I) to form undecaprenyl-pyrophosphoryl-MurNAc-(pentapeptide)GlcNAc (lipid intermediate II). The sequence is that of UDP-N-acetylglucosamine--N-acetylmuramyl-(pentapeptide) pyrophosphoryl-undecaprenol N-acetylglucosamine transferase from Campylobacter jejuni (strain RM1221).